We begin with the raw amino-acid sequence, 141 residues long: MLVPQDYRIPFGIGYLLGTFFLSPDLDLHFSKPSQRWKFLKFLWFPFWVFSRHRGITHVPFLGTLVKLFYLIFIFFFLYFAVLGVLSILGFAPKELLSFDPFAFINEFLKSEKGFFFILGLIVADLLHIVLDIVSSFIKRF.

4 helical membrane passes run 7-24 (YRIPFGIGYLLGTFFLSP), 39-56 (FLKFLWFPFWVFSRHRGI), 69-91 (FYLIFIFFFLYFAVLGVLSILGF), and 116-138 (FFILGLIVADLLHIVLDIVSSFI).

It localises to the cell membrane. This is an uncharacterized protein from Aquifex aeolicus (strain VF5).